Consider the following 423-residue polypeptide: Subtilisin-like protease 2 (423 aa).

The N-terminal stretch at 1–17 (MQLLNLGLLLLLPFVAG) is a signal peptide. Positions 18–123 (EIAPQPEPLR…VHPDQHVYLA (106 aa)) are excised as a propeptide. The Inhibitor I9 domain maps to 37-123 (QYIVTLKEGL…VHPDQHVYLA (87 aa)). Residues 132 to 423 (RWGLGYMSSK…RKFTLPKNTK (292 aa)) form the Peptidase S8 domain. Active-site charge relay system residues include aspartate 170 and histidine 202. Residues asparagine 249, asparagine 262, and asparagine 349 are each glycosylated (N-linked (GlcNAc...) asparagine). Serine 358 functions as the Charge relay system in the catalytic mechanism. Residue asparagine 389 is glycosylated (N-linked (GlcNAc...) asparagine).

It belongs to the peptidase S8 family.

It localises to the secreted. In terms of biological role, secreted subtilisin-like serine protease with keratinolytic activity that contributes to pathogenicity. This is Subtilisin-like protease 2 (SUB2) from Arthroderma otae (strain ATCC MYA-4605 / CBS 113480) (Microsporum canis).